The primary structure comprises 308 residues: Ribosomal RNA large subunit methyltransferase F (308 aa).

Belongs to the methyltransferase superfamily. METTL16/RlmF family.

It localises to the cytoplasm. The enzyme catalyses adenosine(1618) in 23S rRNA + S-adenosyl-L-methionine = N(6)-methyladenosine(1618) in 23S rRNA + S-adenosyl-L-homocysteine + H(+). Functionally, specifically methylates the adenine in position 1618 of 23S rRNA. This chain is Ribosomal RNA large subunit methyltransferase F, found in Salmonella paratyphi A (strain ATCC 9150 / SARB42).